The chain runs to 93 residues: uncharacterized protein (93 aa).

A coiled-coil region spans residues 25 to 68 (DIKKLSQVKSELEQGKALLEEEKKELIEKNSNLNLQISNMNHLK).

This is an uncharacterized protein from Dictyostelium discoideum (Social amoeba).